A 252-amino-acid chain; its full sequence is Imidazole glycerol phosphate synthase subunit HisF (252 aa).

Catalysis depends on residues aspartate 13 and aspartate 132.

It belongs to the HisA/HisF family. Heterodimer of HisH and HisF.

The protein resides in the cytoplasm. The enzyme catalyses 5-[(5-phospho-1-deoxy-D-ribulos-1-ylimino)methylamino]-1-(5-phospho-beta-D-ribosyl)imidazole-4-carboxamide + L-glutamine = D-erythro-1-(imidazol-4-yl)glycerol 3-phosphate + 5-amino-1-(5-phospho-beta-D-ribosyl)imidazole-4-carboxamide + L-glutamate + H(+). It functions in the pathway amino-acid biosynthesis; L-histidine biosynthesis; L-histidine from 5-phospho-alpha-D-ribose 1-diphosphate: step 5/9. Functionally, IGPS catalyzes the conversion of PRFAR and glutamine to IGP, AICAR and glutamate. The HisF subunit catalyzes the cyclization activity that produces IGP and AICAR from PRFAR using the ammonia provided by the HisH subunit. This Campylobacter hominis (strain ATCC BAA-381 / DSM 21671 / CCUG 45161 / LMG 19568 / NCTC 13146 / CH001A) protein is Imidazole glycerol phosphate synthase subunit HisF.